The primary structure comprises 319 residues: HTH-type transcriptional regulator YidZ (319 aa).

Residues 8 to 65 (LDLNLLLCLQLLMQERSVTKAAKRMNVTPSAVSKSLAKLRAWFDDPLFVNSPLGLSPT) form the HTH lysR-type domain. Residues 25–44 (VTKAAKRMNVTPSAVSKSLA) constitute a DNA-binding region (H-T-H motif).

Belongs to the LysR transcriptional regulatory family.

Functionally, involved in anaerobic NO protection. This Escherichia coli O139:H28 (strain E24377A / ETEC) protein is HTH-type transcriptional regulator YidZ.